Reading from the N-terminus, the 199-residue chain is TATA-box-binding protein (199 aa).

Tandem repeats lie at residues 10 to 86 (IENI…VKLL) and 101 to 177 (IQNI…YNQL).

It belongs to the TBP family.

In terms of biological role, general factor that plays a role in the activation of archaeal genes transcribed by RNA polymerase. Binds specifically to the TATA box promoter element which lies close to the position of transcription initiation. The protein is TATA-box-binding protein of Pyrobaculum calidifontis (strain DSM 21063 / JCM 11548 / VA1).